Consider the following 778-residue polypeptide: Endonuclease MutS2 (778 aa).

Residue 328–335 (GPNTGGKT) participates in ATP binding. A Smr domain is found at 702 to 777 (LDLRGKRYEE…GSGATIVTFK (76 aa)).

It belongs to the DNA mismatch repair MutS family. MutS2 subfamily. As to quaternary structure, homodimer. Binds to stalled ribosomes, contacting rRNA.

In terms of biological role, endonuclease that is involved in the suppression of homologous recombination and thus may have a key role in the control of bacterial genetic diversity. Functionally, acts as a ribosome collision sensor, splitting the ribosome into its 2 subunits. Detects stalled/collided 70S ribosomes which it binds and splits by an ATP-hydrolysis driven conformational change. Acts upstream of the ribosome quality control system (RQC), a ribosome-associated complex that mediates the extraction of incompletely synthesized nascent chains from stalled ribosomes and their subsequent degradation. Probably generates substrates for RQC. The polypeptide is Endonuclease MutS2 (Streptococcus pneumoniae (strain Hungary19A-6)).